We begin with the raw amino-acid sequence, 513 residues long: Protein phosphatase 1H (513 aa).

Position 7 is a phosphoserine (Ser-7). The PPM-type phosphatase domain occupies 77 to 506 (ATGYAEVINA…DDISVYVIPL (430 aa)). The disordered stretch occupies residues 109–133 (TITSTPNRNSKRRSSLPNGEGLQLK). Residue Thr-113 is modified to Phosphothreonine. Ser-123 and Ser-210 each carry phosphoserine. Residue Arg-212 is modified to Omega-N-methylarginine. Phosphoserine is present on Ser-220. The residue at position 223 (Thr-223) is a Phosphothreonine. Residue Ser-421 is modified to Phosphoserine.

Belongs to the PP2C family.

It is found in the nucleus. It localises to the cytoplasm. It carries out the reaction O-phospho-L-seryl-[protein] + H2O = L-seryl-[protein] + phosphate. The catalysed reaction is O-phospho-L-threonyl-[protein] + H2O = L-threonyl-[protein] + phosphate. Its function is as follows. Dephosphorylates CDKN1B at 'Thr-187', thus removing a signal for proteasomal degradation. This is Protein phosphatase 1H (Ppm1h) from Mus musculus (Mouse).